We begin with the raw amino-acid sequence, 79 residues long: Putative transmembrane protein ORF17 (79 aa).

2 helical membrane passes run 8–28 (LMIYFFLPVSYLLVGFVIMYY) and 50–70 (VFVMILLIWPFFLFLVVTTTI).

Its subcellular location is the host membrane. This is Putative transmembrane protein ORF17 from Haloarcula hispanica (His1V).